The chain runs to 461 residues: MSLGKVVQIIGAVVDIEFPQNNVPAVYDALRVTDGDLTGLTLEVQQQLGGGVVRTIAMGTTDGLRRGASVMNTGESIQVPVGKATLGRIMNVLGEPIDEAGPIGEEDRMSIHRAAPTYEEQSSSVELLETGIKVIDLVCPFAKGGKVGLFGGAGVGKTVNMMELIRNIAIEHSGYSVFAGVGERTREGNDFYHEMNDSNVLDKVSLVYGQMNEPPGNRLRVALTGLTMAEKFRDEGRDVLFFVDNIYRYTLAGTEVSALLGRMPSAVGYQPTLAEEMGVLQERIASTKTGSITSIQAVYVPADDLTDPSPATTFAHLDATVVLSRDIASLGIYPAVDPLDSSSRQLDPQVIGQEHYDTARGVQTVLQRYKELKDIIAILGMDELSDEDKQLVSRARKIQRFLSQPFFVAEVFTGASGKYVSLKDTISGFKGILNGEFDDMPEQAFYMVGSIEEAQEKAKSM.

An ATP-binding site is contributed by 151–158; the sequence is GGAGVGKT.

It belongs to the ATPase alpha/beta chains family. In terms of assembly, F-type ATPases have 2 components, CF(1) - the catalytic core - and CF(0) - the membrane proton channel. CF(1) has five subunits: alpha(3), beta(3), gamma(1), delta(1), epsilon(1). CF(0) has three main subunits: a(1), b(2) and c(9-12). The alpha and beta chains form an alternating ring which encloses part of the gamma chain. CF(1) is attached to CF(0) by a central stalk formed by the gamma and epsilon chains, while a peripheral stalk is formed by the delta and b chains.

The protein localises to the cell inner membrane. The catalysed reaction is ATP + H2O + 4 H(+)(in) = ADP + phosphate + 5 H(+)(out). Its function is as follows. Produces ATP from ADP in the presence of a proton gradient across the membrane. The catalytic sites are hosted primarily by the beta subunits. The protein is ATP synthase subunit beta of Pseudoalteromonas translucida (strain TAC 125).